We begin with the raw amino-acid sequence, 1350 residues long: uncharacterized protein (1350 aa).

Disordered regions lie at residues 348-371 and 923-944; these read SLVG…LDDS and SKME…RGTG. Basic and acidic residues predominate over residues 923–932; sequence SKMEGGERDA.

This is an uncharacterized protein from Ictalurid herpesvirus 1 (strain Auburn) (IcHV-1).